We begin with the raw amino-acid sequence, 390 residues long: Cystathionine beta-lyase (390 aa).

The residue at position 202 (lysine 202) is an N6-(pyridoxal phosphate)lysine.

Belongs to the trans-sulfuration enzymes family. It depends on pyridoxal 5'-phosphate as a cofactor.

It localises to the cytoplasm. Its subcellular location is the nucleus. The enzyme catalyses L,L-cystathionine + H2O = L-homocysteine + pyruvate + NH4(+). It catalyses the reaction an S-substituted L-cysteine + H2O = a thiol + pyruvate + NH4(+). Its pathway is amino-acid biosynthesis; L-methionine biosynthesis via de novo pathway; L-homocysteine from L-cystathionine: step 1/1. This Schizosaccharomyces pombe (strain 972 / ATCC 24843) (Fission yeast) protein is Cystathionine beta-lyase (str3).